Here is a 218-residue protein sequence, read N- to C-terminus: Small ribosomal subunit protein uS3c (218 aa).

Residues valine 47 to glutamate 118 enclose the KH type-2 domain.

Belongs to the universal ribosomal protein uS3 family. In terms of assembly, part of the 30S ribosomal subunit.

The protein resides in the plastid. It is found in the chloroplast. This Helianthus annuus (Common sunflower) protein is Small ribosomal subunit protein uS3c (rps3).